The chain runs to 508 residues: Phenylalanine--tRNA ligase alpha subunit (508 aa).

Ala-2 carries the post-translational modification N-acetylalanine. Phosphoserine occurs at positions 193 and 301. An N6-acetyllysine modification is found at Lys-311. Residues Thr-329, 372 to 374 (QIE), and Tyr-412 each bind L-phenylalanine. Position 414 (Glu-414) interacts with Mg(2+). Phe-438 contacts L-phenylalanine.

The protein belongs to the class-II aminoacyl-tRNA synthetase family. Phe-tRNA synthetase alpha subunit type 2 subfamily. Heterotetramer; dimer of two heterodimers formed by FARSA and FARSB. Mg(2+) is required as a cofactor.

Its subcellular location is the cytoplasm. It catalyses the reaction tRNA(Phe) + L-phenylalanine + ATP = L-phenylalanyl-tRNA(Phe) + AMP + diphosphate + H(+). The sequence is that of Phenylalanine--tRNA ligase alpha subunit (Farsa) from Rattus norvegicus (Rat).